The sequence spans 417 residues: Gamma-glutamyl phosphate reductase (417 aa).

Belongs to the gamma-glutamyl phosphate reductase family.

The protein resides in the cytoplasm. The enzyme catalyses L-glutamate 5-semialdehyde + phosphate + NADP(+) = L-glutamyl 5-phosphate + NADPH + H(+). Its pathway is amino-acid biosynthesis; L-proline biosynthesis; L-glutamate 5-semialdehyde from L-glutamate: step 2/2. Its function is as follows. Catalyzes the NADPH-dependent reduction of L-glutamate 5-phosphate into L-glutamate 5-semialdehyde and phosphate. The product spontaneously undergoes cyclization to form 1-pyrroline-5-carboxylate. This Serratia marcescens protein is Gamma-glutamyl phosphate reductase.